The sequence spans 948 residues: ELKS/Rab6-interacting/CAST family member 1 (948 aa).

The disordered stretch occupies residues 1–54; it reads MYGSARSVGKVEPSSQSPGRSPRLPRSPRLGHRRTNSTGGSSGNSVGGGSGKTL. At lysine 10 the chain carries N6-acetyllysine. Residues 13–28 are compositionally biased toward low complexity; sequence PSSQSPGRSPRLPRSP. A phosphoserine mark is found at serine 17, serine 21, and serine 37. Threonine 38 bears the Phosphothreonine mark. Residues 40 to 51 show a composition bias toward gly residues; that stretch reads GSSGNSVGGGSG. Residues serine 55, serine 75, serine 94, serine 796, and serine 937 each carry the phosphoserine modification. A coiled-coil region spans residues 144–920; that stretch reads RQARDNTIMD…RMKLMADNYE (777 aa). Over residues 773–796 the composition is skewed to basic and acidic residues; sequence KHKEQVEKKKSAQMLEEARRREDS. Disordered stretches follow at residues 773–801 and 903–948; these read KHKEQVEKKKSAQMLEEARRREDSLSDSS and QLKQ…GIWA. Acidic residues predominate over residues 939–948; it reads DQDEEEGIWA.

As to quaternary structure, interacts with the GTB-bound forms of RAB6A isoform 1 and isoform 2 and with RAB6B. The interaction was strongest with RAB6B, followed by RAB6A isoform 2 and weakest with RAB6A isoform 1. Part of a complex with CHUK, IKBKB and IKBKG. Interacts with CHUK, IKBKB and IKBKG. The interaction with IKBKG is independent of CHUK and IKBKB. Interacts with NFKBIA. Isoform 1 interacts through its C-terminus with the PDZ domains of RIMS1 and RIMS2. Interacts with ERC2/CAST1. Interacts with SDCCAG8. Part of a cortical microtubule stabilization complex (CMSC) composed of KANK1, PPFIA1, PPFIBP1, ERC1/ELKS, PHLDB2/LL5beta, CLASPs, KIF21A and possibly additional interactors; within CMSCs KANK1 and PHLDB2/LL5beta appear to be the core components for targeting of microtubule-binding proteins KIF21A and CLASPs, whereas PPFIA1, PPFIBP1 and ERC1/ELKS serve as scaffolds for protein clustering. Isoform 1 is specifically expressed in brain. A further probable isoform is widely expressed outside of brain It is referred to as ERC1a by PubMed:12391317 and characterized by a C-terminus identical to that of isoforms 1 in human and mouse.

The protein resides in the cytoplasm. Its subcellular location is the cytoskeleton. It is found in the microtubule organizing center. It localises to the centrosome. The protein localises to the membrane. The protein resides in the golgi apparatus membrane. Its subcellular location is the presynaptic active zone. It is found in the cell projection. It localises to the podosome. Its function is as follows. Regulatory subunit of the IKK complex. Probably recruits IkappaBalpha/NFKBIA to the complex. May be involved in the organization of the cytomatrix at the nerve terminals active zone (CAZ) which regulates neurotransmitter release. May be involved in vesicle trafficking at the CAZ. May be involved in Rab-6 regulated endosomes to Golgi transport. The sequence is that of ELKS/Rab6-interacting/CAST family member 1 (Erc1) from Rattus norvegicus (Rat).